A 378-amino-acid chain; its full sequence is Actin-related protein 2/3 complex subunit 1B (378 aa).

WD repeat units lie at residues 8-47 (RFAE…HWER), 53-92 (KHDQ…WVPT), 97-138 (RLNR…WVSK), 143-182 (RHES…VDTK), 203-242 (LSYS…PLAQ), 257-295 (ISEK…KAAS), and 331-375 (VHDN…QELG). The tract at residues 319–340 (TTANDASDSRGGVHDNSITSIV) is disordered.

This sequence belongs to the WD repeat ARPC1 family. Component of the Arp2/3 complex composed of ARP2, ARP3, ARPC1/p41-ARC, ARPC2/p34-ARC, ARPC3/p21-ARC, ARPC4/p20-ARC and ARPC5/p16-ARC. Expressed at low levels in all tissues with a relatively highest expression in inflorescences.

The protein resides in the cytoplasm. It localises to the cytoskeleton. In terms of biological role, functions as a component of the Arp2/3 complex which is involved in regulation of actin polymerization and together with an activating nucleation-promoting factor (NPF) mediates the formation of branched actin networks. Arp2/3 complex plays a critical role in the control of cell morphogenesis via the modulation of cell polarity development. The polypeptide is Actin-related protein 2/3 complex subunit 1B (ARPC1B) (Arabidopsis thaliana (Mouse-ear cress)).